A 379-amino-acid polypeptide reads, in one-letter code: Cobalt-precorrin-5B C(1)-methyltransferase (379 aa).

It belongs to the CbiD family.

It catalyses the reaction Co-precorrin-5B + S-adenosyl-L-methionine = Co-precorrin-6A + S-adenosyl-L-homocysteine. It functions in the pathway cofactor biosynthesis; adenosylcobalamin biosynthesis; cob(II)yrinate a,c-diamide from sirohydrochlorin (anaerobic route): step 6/10. In terms of biological role, catalyzes the methylation of C-1 in cobalt-precorrin-5B to form cobalt-precorrin-6A. This chain is Cobalt-precorrin-5B C(1)-methyltransferase, found in Cyanothece sp. (strain PCC 7425 / ATCC 29141).